The primary structure comprises 319 residues: D-galacturonate reductase (319 aa).

Tyr-58 functions as the Proton donor in the catalytic mechanism. His-121 contacts substrate. 216 to 275 (SPLGAARTKWGDDRVLGSDIIEEIAQAKGKSTAQISLRWVYEQGVSIVTKSYNKERMRQN) provides a ligand contact to NADP(+).

This sequence belongs to the aldo/keto reductase family. In terms of tissue distribution, expressed specifically in the receptacle tissue of the fruit.

It carries out the reaction L-galactonate + NADP(+) = aldehydo-D-galacturonate + NADPH + H(+). It functions in the pathway cofactor biosynthesis; L-ascorbate biosynthesis. Involved in ascorbic acid (vitamin C) biosynthesis. The sequence is that of D-galacturonate reductase (GALUR) from Fragaria ananassa (Strawberry).